Consider the following 566-residue polypeptide: Viral IRF3-like protein (566 aa).

Disordered stretches follow at residues 151 to 170 and 176 to 236; these read PRPFVGENSDSSEEDHPAFC and QTGA…VHTD.

Belongs to the IRF family. In terms of assembly, interacts with host SKP2. Interacts with host USP7.

Its function is as follows. Plays a role in the inhibition of host immune response. Interferes with the transactivating potential of cellular IRFs IRF3 and IRF7 that play a critical role in the induction of IFNA and IFNB genes. Additionally, interferes with surface major histocompatibility complex class II (MHC-II) antigen presentation. The sequence is that of Viral IRF3-like protein (vIRF-3) from Human herpesvirus 8 type P (isolate GK18) (HHV-8).